The primary structure comprises 214 residues: Thiamine-phosphate synthase (214 aa).

4-amino-2-methyl-5-(diphosphooxymethyl)pyrimidine-binding positions include 37–41 (QLRDK) and Asn69. Mg(2+)-binding residues include Asp70 and Asp89. Ser108 contributes to the 4-amino-2-methyl-5-(diphosphooxymethyl)pyrimidine binding site. 134–136 (TDS) is a binding site for 2-[(2R,5Z)-2-carboxy-4-methylthiazol-5(2H)-ylidene]ethyl phosphate. 4-amino-2-methyl-5-(diphosphooxymethyl)pyrimidine is bound at residue Lys137. 2-[(2R,5Z)-2-carboxy-4-methylthiazol-5(2H)-ylidene]ethyl phosphate contacts are provided by residues Gly167 and 187–188 (IS).

It belongs to the thiamine-phosphate synthase family. Mg(2+) serves as cofactor.

The catalysed reaction is 2-[(2R,5Z)-2-carboxy-4-methylthiazol-5(2H)-ylidene]ethyl phosphate + 4-amino-2-methyl-5-(diphosphooxymethyl)pyrimidine + 2 H(+) = thiamine phosphate + CO2 + diphosphate. It catalyses the reaction 2-(2-carboxy-4-methylthiazol-5-yl)ethyl phosphate + 4-amino-2-methyl-5-(diphosphooxymethyl)pyrimidine + 2 H(+) = thiamine phosphate + CO2 + diphosphate. It carries out the reaction 4-methyl-5-(2-phosphooxyethyl)-thiazole + 4-amino-2-methyl-5-(diphosphooxymethyl)pyrimidine + H(+) = thiamine phosphate + diphosphate. It functions in the pathway cofactor biosynthesis; thiamine diphosphate biosynthesis; thiamine phosphate from 4-amino-2-methyl-5-diphosphomethylpyrimidine and 4-methyl-5-(2-phosphoethyl)-thiazole: step 1/1. Functionally, condenses 4-methyl-5-(beta-hydroxyethyl)thiazole monophosphate (THZ-P) and 2-methyl-4-amino-5-hydroxymethyl pyrimidine pyrophosphate (HMP-PP) to form thiamine monophosphate (TMP). The chain is Thiamine-phosphate synthase from Natronomonas pharaonis (strain ATCC 35678 / DSM 2160 / CIP 103997 / JCM 8858 / NBRC 14720 / NCIMB 2260 / Gabara) (Halobacterium pharaonis).